The chain runs to 163 residues: D-aminoacyl-tRNA deacylase (163 aa).

Residues 141–142 (GP) carry the Gly-cisPro motif, important for rejection of L-amino acids motif.

Belongs to the DTD family. In terms of assembly, homodimer.

The protein resides in the cytoplasm. The enzyme catalyses glycyl-tRNA(Ala) + H2O = tRNA(Ala) + glycine + H(+). It catalyses the reaction a D-aminoacyl-tRNA + H2O = a tRNA + a D-alpha-amino acid + H(+). Functionally, an aminoacyl-tRNA editing enzyme that deacylates mischarged D-aminoacyl-tRNAs. Also deacylates mischarged glycyl-tRNA(Ala), protecting cells against glycine mischarging by AlaRS. Acts via tRNA-based rather than protein-based catalysis; rejects L-amino acids rather than detecting D-amino acids in the active site. By recycling D-aminoacyl-tRNA to D-amino acids and free tRNA molecules, this enzyme counteracts the toxicity associated with the formation of D-aminoacyl-tRNA entities in vivo and helps enforce protein L-homochirality. The chain is D-aminoacyl-tRNA deacylase from Neisseria meningitidis serogroup A / serotype 4A (strain DSM 15465 / Z2491).